The chain runs to 347 residues: Dihydroorotate dehydrogenase (quinone) (347 aa).

FMN contacts are provided by residues 65–69 (AGLDK) and threonine 89. Residue lysine 69 participates in substrate binding. 114–118 (NRMGF) contributes to the substrate binding site. Positions 146 and 179 each coordinate FMN. Residue asparagine 179 coordinates substrate. The Nucleophile role is filled by serine 182. Asparagine 184 is a binding site for substrate. FMN contacts are provided by lysine 224 and threonine 252. 253-254 (NT) is a binding site for substrate. Residues glycine 275, glycine 304, and 325 to 326 (YT) contribute to the FMN site.

The protein belongs to the dihydroorotate dehydrogenase family. Type 2 subfamily. Monomer. Requires FMN as cofactor.

It is found in the cell membrane. The enzyme catalyses (S)-dihydroorotate + a quinone = orotate + a quinol. It functions in the pathway pyrimidine metabolism; UMP biosynthesis via de novo pathway; orotate from (S)-dihydroorotate (quinone route): step 1/1. Its function is as follows. Catalyzes the conversion of dihydroorotate to orotate with quinone as electron acceptor. This is Dihydroorotate dehydrogenase (quinone) from Herminiimonas arsenicoxydans.